Here is a 271-residue protein sequence, read N- to C-terminus: 3-methyl-2-oxobutanoate hydroxymethyltransferase (271 aa).

2 residues coordinate Mg(2+): aspartate 53 and aspartate 92. Residues 53-54 (DS), aspartate 92, and lysine 120 contribute to the 3-methyl-2-oxobutanoate site. Glutamate 122 serves as a coordination point for Mg(2+). The Proton acceptor role is filled by glutamate 189.

Belongs to the PanB family. Homodecamer; pentamer of dimers. It depends on Mg(2+) as a cofactor.

It is found in the cytoplasm. The catalysed reaction is 3-methyl-2-oxobutanoate + (6R)-5,10-methylene-5,6,7,8-tetrahydrofolate + H2O = 2-dehydropantoate + (6S)-5,6,7,8-tetrahydrofolate. The protein operates within cofactor biosynthesis; (R)-pantothenate biosynthesis; (R)-pantoate from 3-methyl-2-oxobutanoate: step 1/2. Its function is as follows. Catalyzes the reversible reaction in which hydroxymethyl group from 5,10-methylenetetrahydrofolate is transferred onto alpha-ketoisovalerate to form ketopantoate. The polypeptide is 3-methyl-2-oxobutanoate hydroxymethyltransferase (Burkholderia mallei (strain NCTC 10247)).